Here is a 257-residue protein sequence, read N- to C-terminus: Inositol diphosphatase DSP2 (257 aa).

In terms of domain architecture, Tyrosine-protein phosphatase spans 66–251; sequence NFSMVDNGIF…VSGLKHTPMS (186 aa). 1D-myo-inositol hexakisphosphate-binding residues include Ile-168 and Lys-172. Cys-192 serves as the catalytic Phosphocysteine intermediate.

It belongs to the protein-tyrosine phosphatase family. Atypical dual-specificity phosphatase Siw14-like subfamily. Expressed in roots, leaves, stems, flowers and siliques.

The catalysed reaction is 5-diphospho-1D-myo-inositol 1,2,3,4,6-pentakisphosphate + H2O = 1D-myo-inositol hexakisphosphate + phosphate + H(+). It catalyses the reaction 1,5-bis(diphospho)-1D-myo-inositol 2,3,4,6-tetrakisphosphate + H2O = 1-diphospho-1D-myo-inositol 2,3,4,5,6-pentakisphosphate + phosphate + 2 H(+). It carries out the reaction 3,5-bis(diphospho)-1D-myo-inositol 1,2,4,6-tetrakisphosphate + H2O = 3-diphospho-1D-myo-inositol 1,2,4,5,6-pentakisphosphate + phosphate + 2 H(+). The enzyme catalyses 6-diphospho-1D-myo-inositol pentakisphosphate + H2O = 1D-myo-inositol hexakisphosphate + phosphate + H(+). Functionally, cleaves the beta-phosphate at the 5-position of soluble inositol pyrophosphates. Has highest activity on 5-diphosphoinositol 1,2,3,4,6-pentakisphosphate (5-InsP(7)), 1,5-bis-diphosphoinositol 2,3,4,6-tetrakisphosphate (1,5-InsP(8)) and 3,5-InsP(8). Possesses phosphotyrosine phosphatase activity in vitro. Dephosphorylates the phosphoinositides PI(3,5)P2. Hydrolyzes para-nitrophenyl phosphate and O-methylfluorescein phosphate in vitro. The protein is Inositol diphosphatase DSP2 of Arabidopsis thaliana (Mouse-ear cress).